Consider the following 206-residue polypeptide: Large ribosomal subunit protein uL3 (206 aa).

The interval 127 to 151 (SGGPSSHGSKFHRHLGGTGQATTPA) is disordered.

This sequence belongs to the universal ribosomal protein uL3 family. As to quaternary structure, part of the 50S ribosomal subunit. Forms a cluster with proteins L14 and L19.

Its function is as follows. One of the primary rRNA binding proteins, it binds directly near the 3'-end of the 23S rRNA, where it nucleates assembly of the 50S subunit. The polypeptide is Large ribosomal subunit protein uL3 (Borreliella afzelii (strain PKo) (Borrelia afzelii)).